Consider the following 87-residue polypeptide: Cytochrome c5 (87 aa).

Heme-binding residues include Cys-19, Cys-22, His-23, and Met-63. Cys-69 and Cys-72 form a disulfide bridge.

This sequence belongs to the cytochrome c family. In terms of assembly, homodimer. Binds 1 heme group per subunit.

Functionally, it is unreactive with cytochrome c reductase or oxidase but seems to function as an intermediate in nitrate respiration of facultative anaerobic pseudmonads. The sequence is that of Cytochrome c5 from Ectopseudomonas mendocina (Pseudomonas mendocina).